The sequence spans 500 residues: Lysine--tRNA ligase (500 aa).

The Mg(2+) site is built by E410 and E417.

Belongs to the class-II aminoacyl-tRNA synthetase family. In terms of assembly, homodimer. The cofactor is Mg(2+).

The protein localises to the cytoplasm. It catalyses the reaction tRNA(Lys) + L-lysine + ATP = L-lysyl-tRNA(Lys) + AMP + diphosphate. This is Lysine--tRNA ligase from Shewanella loihica (strain ATCC BAA-1088 / PV-4).